Here is a 129-residue protein sequence, read N- to C-terminus: Large ribosomal subunit protein bL12 (129 aa).

It belongs to the bacterial ribosomal protein bL12 family. In terms of assembly, homodimer. Part of the ribosomal stalk of the 50S ribosomal subunit. Forms a multimeric L10(L12)X complex, where L10 forms an elongated spine to which 2 to 4 L12 dimers bind in a sequential fashion. Binds GTP-bound translation factors.

Functionally, forms part of the ribosomal stalk which helps the ribosome interact with GTP-bound translation factors. Is thus essential for accurate translation. This chain is Large ribosomal subunit protein bL12, found in Photobacterium profundum (strain SS9).